The primary structure comprises 285 residues: HTH-type transcriptional regulator MurR (285 aa).

An HTH rpiR-type domain is found at 1 to 77 (MLYLTKIRNA…MALIGEYSAS (77 aa)). The H-T-H motif DNA-binding region spans 37–56 (SRQMAKQLGISQSSIVKFAQ). The SIS domain occupies 128 to 268 (IIEVISKAPF…FVGLVQLNDV (141 aa)).

Homotetramer.

It functions in the pathway amino-sugar metabolism; N-acetylmuramate degradation [regulation]. Functionally, represses the expression of the murPQ operon involved in the uptake and degradation of N-acetylmuramic acid (MurNAc). Binds to two adjacent inverted repeats within the operator region. MurNAc 6-phosphate, the substrate of MurQ, is the specific inducer that weakens binding of MurR to the operator. The polypeptide is HTH-type transcriptional regulator MurR (Escherichia coli (strain ATCC 8739 / DSM 1576 / NBRC 3972 / NCIMB 8545 / WDCM 00012 / Crooks)).